A 292-amino-acid chain; its full sequence is Phosphatidylglycerol--prolipoprotein diacylglyceryl transferase (292 aa).

7 helical membrane passes run 25–45, 70–90, 102–122, 138–158, 193–213, 217–237, and 255–275; these read ITLHWYGLGYVVGILFAWWYA, FVVWSAISVVVGGRLGQVLVW, IIAVWDGGMSFHGGLIGIIIA, FDIIAAGAPIGIGIVRICNFI, FMEGFILFMILFIVIFTFKAF, GTVSGIFIIGYAIARSISEVY, and GFTYGMALSLPMLLLGFYLLL. An a 1,2-diacyl-sn-glycero-3-phospho-(1'-sn-glycerol)-binding site is contributed by Arg153.

Belongs to the Lgt family.

Its subcellular location is the cell inner membrane. The catalysed reaction is L-cysteinyl-[prolipoprotein] + a 1,2-diacyl-sn-glycero-3-phospho-(1'-sn-glycerol) = an S-1,2-diacyl-sn-glyceryl-L-cysteinyl-[prolipoprotein] + sn-glycerol 1-phosphate + H(+). It participates in protein modification; lipoprotein biosynthesis (diacylglyceryl transfer). In terms of biological role, catalyzes the transfer of the diacylglyceryl group from phosphatidylglycerol to the sulfhydryl group of the N-terminal cysteine of a prolipoprotein, the first step in the formation of mature lipoproteins. In Bartonella tribocorum (strain CIP 105476 / IBS 506), this protein is Phosphatidylglycerol--prolipoprotein diacylglyceryl transferase.